An 84-amino-acid chain; its full sequence is Elongation factor 1-beta (84 aa).

This sequence belongs to the EF-1-beta/EF-1-delta family.

Promotes the exchange of GDP for GTP in EF-1-alpha/GDP, thus allowing the regeneration of EF-1-alpha/GTP that could then be used to form the ternary complex EF-1-alpha/GTP/AAtRNA. This is Elongation factor 1-beta from Methanoculleus marisnigri (strain ATCC 35101 / DSM 1498 / JR1).